Consider the following 397-residue polypeptide: DnaJ protein homolog 1 (397 aa).

The 52-residue stretch at 1 to 52 (KNASPDDLKKAYRKAAIKNHPDKGGDPEKFKELAQAYDVLSDPEKREIYDQY) folds into the J domain. Residues 114–198 (GTSKKLSLSR…CKGEKVVQEK (85 aa)) form a CR-type zinc finger. 4 CXXCXGXG motif repeats span residues 127 to 134 (CSKCNGKG), 143 to 150 (CASCQGSG), 170 to 177 (CNDCKGTG), and 186 to 193 (CPLCKGEK). The segment at 367-397 (MRRKQHQHAQEAYDEDDEGHGGGQRVQCAQQ) is disordered. Cys-394 carries the post-translational modification Cysteine methyl ester. Cys-394 is lipidated: S-farnesyl cysteine. Positions 395-397 (AQQ) are cleaved as a propeptide — removed in mature form.

Its subcellular location is the membrane. Its function is as follows. Plays a continuous role in plant development probably in the structural organization of compartments. This chain is DnaJ protein homolog 1 (DNAJ1), found in Allium porrum (Leek).